Reading from the N-terminus, the 535-residue chain is Phosphoenolpyruvate carboxykinase (ATP) (535 aa).

Arginine 59, tyrosine 201, and lysine 207 together coordinate substrate. Residues lysine 207, histidine 226, and glycine 243–threonine 251 each bind ATP. Lysine 207 and histidine 226 together coordinate Mn(2+). Aspartate 264 serves as a coordination point for Mn(2+). ATP-binding positions include glutamate 292, arginine 328, arginine 444–isoleucine 445, and threonine 450. Arginine 328 contributes to the substrate binding site.

The protein belongs to the phosphoenolpyruvate carboxykinase (ATP) family. The cofactor is Mn(2+).

It is found in the cytoplasm. It carries out the reaction oxaloacetate + ATP = phosphoenolpyruvate + ADP + CO2. It participates in carbohydrate biosynthesis; gluconeogenesis. Involved in the gluconeogenesis. Catalyzes the conversion of oxaloacetate (OAA) to phosphoenolpyruvate (PEP) through direct phosphoryl transfer between the nucleoside triphosphate and OAA. The sequence is that of Phosphoenolpyruvate carboxykinase (ATP) from Bacteroides fragilis (strain ATCC 25285 / DSM 2151 / CCUG 4856 / JCM 11019 / LMG 10263 / NCTC 9343 / Onslow / VPI 2553 / EN-2).